Consider the following 83-residue polypeptide: MKEKKRKGMSNKKVLTGVVVATKCDKTIKVMVSRMVRHKTYKKIVKKRKNYVVHDEYNKCKCGDVVKIQEHIPISATKRWIVI.

The protein belongs to the universal ribosomal protein uS17 family. In terms of assembly, part of the 30S ribosomal subunit.

In terms of biological role, one of the primary rRNA binding proteins, it binds specifically to the 5'-end of 16S ribosomal RNA. This is Small ribosomal subunit protein uS17 from Ehrlichia canis (strain Jake).